Reading from the N-terminus, the 153-residue chain is 3-hydroxyacyl-[acyl-carrier-protein] dehydratase FabZ (153 aa).

The active site involves histidine 56.

Belongs to the thioester dehydratase family. FabZ subfamily.

Its subcellular location is the cytoplasm. It catalyses the reaction a (3R)-hydroxyacyl-[ACP] = a (2E)-enoyl-[ACP] + H2O. Involved in unsaturated fatty acids biosynthesis. Catalyzes the dehydration of short chain beta-hydroxyacyl-ACPs and long chain saturated and unsaturated beta-hydroxyacyl-ACPs. This Nitrosomonas europaea (strain ATCC 19718 / CIP 103999 / KCTC 2705 / NBRC 14298) protein is 3-hydroxyacyl-[acyl-carrier-protein] dehydratase FabZ.